The sequence spans 371 residues: Histidinol-phosphate aminotransferase (371 aa).

N6-(pyridoxal phosphate)lysine is present on Lys232.

Belongs to the class-II pyridoxal-phosphate-dependent aminotransferase family. Histidinol-phosphate aminotransferase subfamily. Homodimer. Pyridoxal 5'-phosphate serves as cofactor.

The catalysed reaction is L-histidinol phosphate + 2-oxoglutarate = 3-(imidazol-4-yl)-2-oxopropyl phosphate + L-glutamate. It participates in amino-acid biosynthesis; L-histidine biosynthesis; L-histidine from 5-phospho-alpha-D-ribose 1-diphosphate: step 7/9. The polypeptide is Histidinol-phosphate aminotransferase (Methylibium petroleiphilum (strain ATCC BAA-1232 / LMG 22953 / PM1)).